The sequence spans 416 residues: Gamma-glutamyl phosphate reductase (416 aa).

Belongs to the gamma-glutamyl phosphate reductase family.

It is found in the cytoplasm. The enzyme catalyses L-glutamate 5-semialdehyde + phosphate + NADP(+) = L-glutamyl 5-phosphate + NADPH + H(+). It participates in amino-acid biosynthesis; L-proline biosynthesis; L-glutamate 5-semialdehyde from L-glutamate: step 2/2. Functionally, catalyzes the NADPH-dependent reduction of L-glutamate 5-phosphate into L-glutamate 5-semialdehyde and phosphate. The product spontaneously undergoes cyclization to form 1-pyrroline-5-carboxylate. This Streptococcus mutans serotype c (strain ATCC 700610 / UA159) protein is Gamma-glutamyl phosphate reductase.